The chain runs to 283 residues: DegV domain-containing protein lmo2514 (283 aa).

The 278-residue stretch at 5–282 folds into the DegV domain; it reads IAVVTDSTTY…EGALGLTWSI (278 aa). The hexadecanoate site is built by S63 and S96.

Its function is as follows. May bind long-chain fatty acids, such as palmitate, and may play a role in lipid transport or fatty acid metabolism. This is DegV domain-containing protein lmo2514 from Listeria monocytogenes serovar 1/2a (strain ATCC BAA-679 / EGD-e).